A 140-amino-acid polypeptide reads, in one-letter code: Small ribosomal subunit protein uS9A (140 aa).

This sequence belongs to the universal ribosomal protein uS9 family. As to quaternary structure, component of the small ribosomal subunit (SSU). Mature yeast ribosomes consist of a small (40S) and a large (60S) subunit. The 40S small subunit contains 1 molecule of ribosomal RNA (18S rRNA) and at least 33 different proteins. The large 60S subunit contains 3 rRNA molecules (25S, 5.8S and 5S rRNA) and at least 46 different proteins.

It is found in the cytoplasm. Functionally, component of the ribosome, a large ribonucleoprotein complex responsible for the synthesis of proteins in the cell. The small ribosomal subunit (SSU) binds messenger RNAs (mRNAs) and translates the encoded message by selecting cognate aminoacyl-transfer RNA (tRNA) molecules. The large subunit (LSU) contains the ribosomal catalytic site termed the peptidyl transferase center (PTC), which catalyzes the formation of peptide bonds, thereby polymerizing the amino acids delivered by tRNAs into a polypeptide chain. The nascent polypeptides leave the ribosome through a tunnel in the LSU and interact with protein factors that function in enzymatic processing, targeting, and the membrane insertion of nascent chains at the exit of the ribosomal tunnel. This Schizosaccharomyces pombe (strain 972 / ATCC 24843) (Fission yeast) protein is Small ribosomal subunit protein uS9A (rps1601).